Reading from the N-terminus, the 146-residue chain is Hemoglobin subunit beta (146 aa).

V1 carries the N-acetylvaline modification. The 145-residue stretch at 2–146 (HLTADEKTAV…VANALAHKYH (145 aa)) folds into the Globin domain. The residue at position 12 (T12) is a Phosphothreonine. Phosphoserine is present on S44. K59 is modified (N6-acetyllysine). H63 is a binding site for heme b. N6-acetyllysine is present on K82. H92 provides a ligand contact to heme b. An S-nitrosocysteine modification is found at C93. K144 carries the post-translational modification N6-acetyllysine.

This sequence belongs to the globin family. Heterotetramer of two alpha chains and two beta chains. As to expression, red blood cells.

Involved in oxygen transport from the lung to the various peripheral tissues. The polypeptide is Hemoglobin subunit beta (HBB) (Procyon lotor (Raccoon)).